Here is a 418-residue protein sequence, read N- to C-terminus: Glutamyl-tRNA reductase (418 aa).

Substrate is bound by residues 49-52 (TCNR), serine 109, 114-116 (EPQ), and glutamine 120. Cysteine 50 (nucleophile) is an active-site residue. Residue 189 to 194 (GAGETI) coordinates NADP(+).

The protein belongs to the glutamyl-tRNA reductase family. As to quaternary structure, homodimer.

It catalyses the reaction (S)-4-amino-5-oxopentanoate + tRNA(Glu) + NADP(+) = L-glutamyl-tRNA(Glu) + NADPH + H(+). It participates in porphyrin-containing compound metabolism; protoporphyrin-IX biosynthesis; 5-aminolevulinate from L-glutamyl-tRNA(Glu): step 1/2. Functionally, catalyzes the NADPH-dependent reduction of glutamyl-tRNA(Glu) to glutamate 1-semialdehyde (GSA). The chain is Glutamyl-tRNA reductase from Escherichia coli O157:H7.